A 240-amino-acid chain; its full sequence is MATPHINAPEGAFADVVLMPGDPLRAKYIAETFLEDAVQVTDVRNMFGYTGTYKGRRISVMGHGMGIPSCSIYAKELITEYGVKKIIRVGSCGAVRQDVKVRDVIIGSGACTDSKVNRIRFRDNDFAAISDFDMTLAAVQAAKQKGIAARVGNLFSADLFYTPDVEMFDVMEKYGILGVEMEAAGIYAVAAEYGAKALAICTVSDHIRTGEQTSSEERQLTFNDMITIALESVLIGDKAE.

His5 serves as a coordination point for a purine D-ribonucleoside. Residues Gly21, Arg25, Arg44, and Arg88 to Ser91 each bind phosphate. Residues Glu180–Glu182 and Ser204–Asp205 contribute to the a purine D-ribonucleoside site. Catalysis depends on Asp205, which acts as the Proton donor.

This sequence belongs to the PNP/UDP phosphorylase family. Homohexamer; trimer of homodimers.

It carries out the reaction a purine D-ribonucleoside + phosphate = a purine nucleobase + alpha-D-ribose 1-phosphate. It catalyses the reaction a purine 2'-deoxy-D-ribonucleoside + phosphate = a purine nucleobase + 2-deoxy-alpha-D-ribose 1-phosphate. Catalyzes the reversible phosphorolytic breakdown of the N-glycosidic bond in the beta-(deoxy)ribonucleoside molecules, with the formation of the corresponding free purine bases and pentose-1-phosphate. The protein is Purine nucleoside phosphorylase DeoD-type of Actinobacillus pleuropneumoniae serotype 5b (strain L20).